A 95-amino-acid polypeptide reads, in one-letter code: Large ribosomal subunit protein bL25 (95 aa).

This sequence belongs to the bacterial ribosomal protein bL25 family. In terms of assembly, part of the 50S ribosomal subunit; part of the 5S rRNA/L5/L18/L25 subcomplex. Contacts the 5S rRNA. Binds to the 5S rRNA independently of L5 and L18.

Functionally, this is one of the proteins that binds to the 5S RNA in the ribosome where it forms part of the central protuberance. The protein is Large ribosomal subunit protein bL25 of Actinobacillus pleuropneumoniae serotype 5b (strain L20).